The chain runs to 131 residues: MATVPTRSGSPRQLTTKQTGDAWEAQARRWLEGKGLRFIAANVNERGGEIDLIMREGLTTVFVEVRYRRSALYGGAAASVTRSKQHKLLQTARLWLARHNGSFDTVDCRFDVVAFTGNEVEWIKDAFNDHS.

A compositionally biased stretch (polar residues) spans 1-19 (MATVPTRSGSPRQLTTKQT). Residues 1–21 (MATVPTRSGSPRQLTTKQTGD) are disordered.

Belongs to the UPF0102 family.

In Shigella flexneri serotype 5b (strain 8401), this protein is UPF0102 protein YraN.